The sequence spans 430 residues: Glutamate-1-semialdehyde 2,1-aminomutase (430 aa).

Lys-269 carries the post-translational modification N6-(pyridoxal phosphate)lysine.

The protein belongs to the class-III pyridoxal-phosphate-dependent aminotransferase family. HemL subfamily. As to quaternary structure, homodimer. Pyridoxal 5'-phosphate serves as cofactor.

The protein localises to the cytoplasm. It carries out the reaction (S)-4-amino-5-oxopentanoate = 5-aminolevulinate. It participates in porphyrin-containing compound metabolism; protoporphyrin-IX biosynthesis; 5-aminolevulinate from L-glutamyl-tRNA(Glu): step 2/2. This Desulfitobacterium hafniense (strain DSM 10664 / DCB-2) protein is Glutamate-1-semialdehyde 2,1-aminomutase.